The primary structure comprises 684 residues: Pheromone-processing carboxypeptidase KEX1 (684 aa).

A signal peptide spans 1 to 16; that stretch reads MRFWYFSAILWVVCQA. At 17 to 588 the chain is on the lumenal side; it reads LPSKKQYSVA…QRKRRKGTFK (572 aa). Active-site residues include S181 and D390. 2 N-linked (GlcNAc...) asparagine glycosylation sites follow: N443 and N451. The active site involves H454. Positions 498–582 are disordered; the sequence is DNSKLGVLGI…KEEQDRQRKR (85 aa). Residues 514–547 show a composition bias toward acidic residues; the sequence is EEEELEEEFDQYVDELEEGESESGLLDDDKEDET. Basic and acidic residues predominate over residues 554–578; the sequence is NDDKNKGGEDKPNENPDKEKEEQDR. Residues 589–609 traverse the membrane as a helical segment; sequence IFGITILVVLTLGSFVFYIYI. Residues 610 to 684 are Cytoplasmic-facing; it reads RKHTNKTRAI…LDESFELENL (75 aa). A disordered region spans residues 641 to 684; sequence LEHGYDFETDQSQPRSGQSAPKKNGSYTRVPNTELDESFELENL. Positions 650–671 are enriched in polar residues; sequence DQSQPRSGQSAPKKNGSYTRVP. A compositionally biased stretch (acidic residues) spans 674–684; sequence ELDESFELENL.

This sequence belongs to the peptidase S10 family.

It localises to the golgi apparatus. Its subcellular location is the trans-Golgi network membrane. It catalyses the reaction Preferential release of a C-terminal arginine or lysine residue.. Protease with a carboxypeptidase B-like function involved in the C-terminal processing of the lysine and arginine residues from protein precursors. Promotes cell fusion and is involved in the programmed cell death. In Zygosaccharomyces rouxii (strain ATCC 2623 / CBS 732 / NBRC 1130 / NCYC 568 / NRRL Y-229), this protein is Pheromone-processing carboxypeptidase KEX1 (KEX1).